The sequence spans 442 residues: Tryptophan synthase beta chain 2 (442 aa).

Lys122 is modified (N6-(pyridoxal phosphate)lysine).

It belongs to the TrpB family. Tetramer of two alpha and two beta chains. The cofactor is pyridoxal 5'-phosphate.

It catalyses the reaction (1S,2R)-1-C-(indol-3-yl)glycerol 3-phosphate + L-serine = D-glyceraldehyde 3-phosphate + L-tryptophan + H2O. Its pathway is amino-acid biosynthesis; L-tryptophan biosynthesis; L-tryptophan from chorismate: step 5/5. The beta subunit is responsible for the synthesis of L-tryptophan from indole and L-serine. The protein is Tryptophan synthase beta chain 2 (trpB2) of Methanosarcina mazei (strain ATCC BAA-159 / DSM 3647 / Goe1 / Go1 / JCM 11833 / OCM 88) (Methanosarcina frisia).